The primary structure comprises 236 residues: Ubiquinone biosynthesis O-methyltransferase (236 aa).

S-adenosyl-L-methionine-binding residues include arginine 39, glycine 59, aspartate 80, and methionine 124.

This sequence belongs to the methyltransferase superfamily. UbiG/COQ3 family.

It catalyses the reaction a 3-demethylubiquinol + S-adenosyl-L-methionine = a ubiquinol + S-adenosyl-L-homocysteine + H(+). The catalysed reaction is a 3-(all-trans-polyprenyl)benzene-1,2-diol + S-adenosyl-L-methionine = a 2-methoxy-6-(all-trans-polyprenyl)phenol + S-adenosyl-L-homocysteine + H(+). Its pathway is cofactor biosynthesis; ubiquinone biosynthesis. Its function is as follows. O-methyltransferase that catalyzes the 2 O-methylation steps in the ubiquinone biosynthetic pathway. In Pseudoalteromonas translucida (strain TAC 125), this protein is Ubiquinone biosynthesis O-methyltransferase.